The primary structure comprises 1002 residues: Isoleucine--tRNA ligase (1002 aa).

The short motif at 70–80 (PYANGNIHIGH) is the 'HIGH' region element. Glu630 lines the L-isoleucyl-5'-AMP pocket. The 'KMSKS' region motif lies at 671 to 675 (KMSKS). Lys674 contributes to the ATP binding site.

Belongs to the class-I aminoacyl-tRNA synthetase family. IleS type 1 subfamily. As to quaternary structure, monomer.

The protein localises to the cytoplasm. It catalyses the reaction tRNA(Ile) + L-isoleucine + ATP = L-isoleucyl-tRNA(Ile) + AMP + diphosphate. In terms of biological role, catalyzes the attachment of isoleucine to tRNA(Ile). As IleRS can inadvertently accommodate and process structurally similar amino acids such as valine, to avoid such errors it has two additional distinct tRNA(Ile)-dependent editing activities. One activity is designated as 'pretransfer' editing and involves the hydrolysis of activated Val-AMP. The other activity is designated 'posttransfer' editing and involves deacylation of mischarged Val-tRNA(Ile). The sequence is that of Isoleucine--tRNA ligase from Bradyrhizobium diazoefficiens (strain JCM 10833 / BCRC 13528 / IAM 13628 / NBRC 14792 / USDA 110).